The chain runs to 522 residues: Glycerol kinase (522 aa).

A substrate-binding site is contributed by Thr-15. Arg-19 contacts ATP. Substrate contacts are provided by residues 89–90, Tyr-143, and 255–256; these read RE and DQ. ATP is bound by residues Thr-276, Gly-321, and 430–434; that span reads GATAN.

The protein belongs to the FGGY kinase family. In terms of tissue distribution, highly expressed in germinating seeds and senescent leaves, and at lower levels in roots, leaves, flowers and siliques.

It localises to the cytoplasm. Its subcellular location is the cytosol. The enzyme catalyses glycerol + ATP = sn-glycerol 3-phosphate + ADP + H(+). Its pathway is polyol metabolism; glycerol degradation via glycerol kinase pathway; sn-glycerol 3-phosphate from glycerol: step 1/1. Key enzyme in the regulation of glycerol uptake and metabolism. Required for resistance to nonhost Pseudomonas bacteria and to the pathogenic fungus B.cinerea. This is Glycerol kinase (GLPK) from Arabidopsis thaliana (Mouse-ear cress).